Reading from the N-terminus, the 471-residue chain is Ribosomal protein uS12 methylthiotransferase RimO (471 aa).

The 121-residue stretch at 2-122 folds into the MTTase N-terminal domain; the sequence is IKVSLISLGC…VAPIIQEIYA (121 aa). 6 residues coordinate [4Fe-4S] cluster: cysteine 11, cysteine 47, cysteine 84, cysteine 166, cysteine 170, and cysteine 173. The Radical SAM core domain occupies 152–395; sequence LTPKHFAYVK…MALQKQIAAD (244 aa). The 61-residue stretch at 398–458 folds into the TRAM domain; that stretch reads KTYVGRTLRV…DYDLLALPPG (61 aa).

It belongs to the methylthiotransferase family. RimO subfamily. Requires [4Fe-4S] cluster as cofactor.

It localises to the cytoplasm. It catalyses the reaction L-aspartate(89)-[ribosomal protein uS12]-hydrogen + (sulfur carrier)-SH + AH2 + 2 S-adenosyl-L-methionine = 3-methylsulfanyl-L-aspartate(89)-[ribosomal protein uS12]-hydrogen + (sulfur carrier)-H + 5'-deoxyadenosine + L-methionine + A + S-adenosyl-L-homocysteine + 2 H(+). Catalyzes the methylthiolation of an aspartic acid residue of ribosomal protein uS12. In Opitutus terrae (strain DSM 11246 / JCM 15787 / PB90-1), this protein is Ribosomal protein uS12 methylthiotransferase RimO.